The primary structure comprises 392 residues: Lipid-A-disaccharide synthase (392 aa).

It belongs to the LpxB family.

The catalysed reaction is a lipid X + a UDP-2-N,3-O-bis[(3R)-3-hydroxyacyl]-alpha-D-glucosamine = a lipid A disaccharide + UDP + H(+). It participates in bacterial outer membrane biogenesis; LPS lipid A biosynthesis. Its function is as follows. Condensation of UDP-2,3-diacylglucosamine and 2,3-diacylglucosamine-1-phosphate to form lipid A disaccharide, a precursor of lipid A, a phosphorylated glycolipid that anchors the lipopolysaccharide to the outer membrane of the cell. The chain is Lipid-A-disaccharide synthase from Syntrophotalea carbinolica (strain DSM 2380 / NBRC 103641 / GraBd1) (Pelobacter carbinolicus).